A 328-amino-acid polypeptide reads, in one-letter code: Protease HtpX homolog (328 aa).

2 consecutive transmembrane segments (helical) span residues 6–26 and 28–48; these read TAML…LIGG and SGMM…YWNS. Residue histidine 130 participates in Zn(2+) binding. Glutamate 131 is a catalytic residue. Position 134 (histidine 134) interacts with Zn(2+). 2 helical membrane passes run 145–165 and 172–192; these read ITAT…FFGG and PLGA…AMLV. Glutamate 201 lines the Zn(2+) pocket. Residues 279–328 are disordered; the sequence is QYGGGTGPSVGTPTRSGSTGPAMTANPERKSRSVPNTGRGGSQPPKGPWS. Positions 287–299 are enriched in low complexity; it reads SVGTPTRSGSTGP.

It belongs to the peptidase M48B family. The cofactor is Zn(2+).

It is found in the cell inner membrane. The chain is Protease HtpX homolog from Rhizobium rhizogenes (strain K84 / ATCC BAA-868) (Agrobacterium radiobacter).